An 833-amino-acid polypeptide reads, in one-letter code: Leucine--tRNA ligase (833 aa).

The short motif at 41 to 52 is the 'HIGH' region element; it reads PYPSGAGLHVGH. Positions 610–614 match the 'KMSKS' region motif; that stretch reads KMSKS. Lys613 provides a ligand contact to ATP.

This sequence belongs to the class-I aminoacyl-tRNA synthetase family.

It localises to the cytoplasm. The enzyme catalyses tRNA(Leu) + L-leucine + ATP = L-leucyl-tRNA(Leu) + AMP + diphosphate. This chain is Leucine--tRNA ligase, found in Streptococcus pneumoniae (strain ATCC 700669 / Spain 23F-1).